The following is a 479-amino-acid chain: Baeyer-Villiger monooxygenase AacuH (479 aa).

Residues 14 to 34 (DSLGHPDGASRPPVSAESLSR) form a disordered region.

The protein belongs to the AflY oxidoreductase family.

Its pathway is secondary metabolite biosynthesis. In terms of biological role, baeyer-Villiger monooxygenase; part of the gene cluster that mediates the biosynthesis of the tetrahydroxanthone dimer secalonic acid D. The pathway begins with the synthesis of atrochrysone thioester by the polyketide synthase AacuL. The atrochrysone carboxyl ACP thioesterase AacuM then breaks the thioester bond and releases the atrochrysone carboxylic acid from AacuL. Atrochrysone carboxylic acid is decarboxylated by the decarboxylase AacuI, and oxidized by the anthrone oxygenase AacuG to yield emodin. Emodin is then reduced to emodin hydroquinone by a yet unidentified oxidoreductase. A-ring reduction by the short chain dehydrogenase AacuN, dehydration by the scytalone dehydratase-like protein AacuK and probable spontaneous re-oxidation, results in overall deoxygenation to chrysophanol. Baeyer-Villiger oxidation by the Baeyer-Villiger monooxygenase (BVMO) AacuH then yields monodictyphenone. Monodictyphenone is transformed into compounds with the tetrahydroxanthone skeleton via methylesterification by the methyltransferase AacuQ, followed by the action of the flavin-dependent monooxygenase AacuC, the isomerase AacuP, and the short chain dehydrogenase/reductase AacuF or AacuD. AacuF and AacuD should accept the same compound as a substrate but perform the ketoreduction with a different stereoselectivity, thus yielding blennolides B and A, respectively. In the final step of the biosynthesis, the cytochrome P450 monooxygenase AacuE accepts blennolide B and/or blennolide A to conduct the dimerization reaction to furnish the tetrahydroxanthone dimers, secalonic acids D, B, and F. This Aspergillus aculeatus (strain ATCC 16872 / CBS 172.66 / WB 5094) protein is Baeyer-Villiger monooxygenase AacuH.